Here is a 623-residue protein sequence, read N- to C-terminus: E3 ubiquitin-protein ligase ORTHRUS 5 (623 aa).

A PHD-type zinc finger spans residues 12–62 (DGVCMRCQVNPPSEETLTCGTCVTPWHVSCLLPESLASSTGDWECPDCSGV). Residues 129-169 (CSICIQLPERPVTTPCGHNFCLKCFEKWAVGQGKLTCMICR) form an RING-type 1 zinc finger. The YDG domain occupies 258-407 (TRNQGVLVGE…HKMCRYLFVR (150 aa)). The segment at 498–555 (CQICRKVLSLPVTTPCAHNFCKACLEAKFAGITQLRDRSNGVRKLRAKKNIMTCPCCT) adopts an RING-type 2 zinc-finger fold. The interval 580–623 (KSEEEAEVAESSNISEEEGEEESEPPTKKIKMDKNSVGGTSLSA) is disordered. The span at 594 to 603 (SEEEGEEESE) shows a compositional bias: acidic residues. A compositionally biased stretch (basic and acidic residues) spans 604 to 613 (PPTKKIKMDK).

Expressed in inflorescences.

The protein resides in the nucleus. The enzyme catalyses S-ubiquitinyl-[E2 ubiquitin-conjugating enzyme]-L-cysteine + [acceptor protein]-L-lysine = [E2 ubiquitin-conjugating enzyme]-L-cysteine + N(6)-ubiquitinyl-[acceptor protein]-L-lysine.. The protein operates within protein modification; protein ubiquitination. E3 ubiquitin-protein ligase. Participates in CpG methylation-dependent transcriptional regulation and epigenetic transcriptional silencing. Mediates ubiquitination with the E2 ubiquitin-conjugating enzyme UBC11. The chain is E3 ubiquitin-protein ligase ORTHRUS 5 (ORTH5) from Arabidopsis thaliana (Mouse-ear cress).